The chain runs to 285 residues: ATP synthase gamma chain (285 aa).

Belongs to the ATPase gamma chain family. F-type ATPases have 2 components, CF(1) - the catalytic core - and CF(0) - the membrane proton channel. CF(1) has five subunits: alpha(3), beta(3), gamma(1), delta(1), epsilon(1). CF(0) has three main subunits: a, b and c.

It localises to the cell membrane. Functionally, produces ATP from ADP in the presence of a proton gradient across the membrane. The gamma chain is believed to be important in regulating ATPase activity and the flow of protons through the CF(0) complex. In Geobacillus sp. (strain WCH70), this protein is ATP synthase gamma chain.